The primary structure comprises 115 residues: Ubiquitin-related modifier 1 (115 aa).

Gly-115 carries the 1-thioglycine modification. Gly-115 is covalently cross-linked (Glycyl lysine isopeptide (Gly-Lys) (interchain with K-? in acceptor proteins)).

The protein belongs to the URM1 family. C-terminal thiocarboxylation occurs in 2 steps, it is first acyl-adenylated (-COAMP) via the hesA/moeB/thiF part of UBA4, then thiocarboxylated (-COSH) via the rhodanese domain of UBA4.

Its subcellular location is the cytoplasm. Its pathway is tRNA modification; 5-methoxycarbonylmethyl-2-thiouridine-tRNA biosynthesis. Functionally, acts as a sulfur carrier required for 2-thiolation of mcm(5)S(2)U at tRNA wobble positions of cytosolic tRNA(Lys), tRNA(Glu) and tRNA(Gln). Serves as sulfur donor in tRNA 2-thiolation reaction by being thiocarboxylated (-COSH) at its C-terminus by the MOCS3 homolog UBA4. The sulfur is then transferred to tRNA to form 2-thiolation of mcm(5)S(2)U. Prior mcm(5) tRNA modification by the elongator complex is required for 2-thiolation. Also acts as a ubiquitin-like protein (UBL) that is covalently conjugated via an isopeptide bond to lysine residues of target proteins such as AHP1. The thiocarboxylated form serves as substrate for conjugation and oxidative stress specifically induces the formation of UBL-protein conjugates. This is Ubiquitin-related modifier 1 from Coccidioides immitis (strain RS) (Valley fever fungus).